The chain runs to 473 residues: Sun domain-containing protein 1 (473 aa).

The segment at 1–47 (MALRHTISPQFSNRHSPPVTRSVSRTGVHQPLDTSTPVTRRDSQPGT) is disordered. The segment covering 7-47 (ISPQFSNRHSPPVTRSVSRTGVHQPLDTSTPVTRRDSQPGT) has biased composition (polar residues). Coiled-coil stretches lie at residues 163 to 191 (ISNLRAEFSAHDKQLDFKTDHLEKLLENV) and 204 to 235 (EELKQIKLWQAEISDALQQMKKEIDDAKSTKI). Residues 237–257 (HSTPEKAPETAPTASLPPSSQ) are disordered. Residues 248 to 257 (PTASLPPSSQ) show a composition bias toward polar residues. Residues 262-282 (HITRRALLGVNVANSLIGASI) form a helical membrane-spanning segment. The 165-residue stretch at 279-443 (GASIDHSCSS…YLIRVYGEPV (165 aa)) folds into the SUN domain. A disordered region spans residues 443–473 (VDPPKETQPMTDNGTESKLESAIVNSVSETA).

It localises to the nucleus membrane. The protein resides in the nucleus envelope. In terms of biological role, involved in centrosome attachment to the nucleus. Required for zyg-12 localization to the nuclear envelope. Together with pot-1, it is required to anchor telomeres to the nuclear envelope in embryos. The chain is Sun domain-containing protein 1 from Caenorhabditis elegans.